The primary structure comprises 228 residues: 2,3-bisphosphoglycerate-dependent phosphoglycerate mutase (228 aa).

Residues 7-14 (RHGESAWN), 20-21 (TG), Arg59, 86-89 (ERHY), Lys97, 113-114 (RR), and 182-183 (GN) each bind substrate. His8 serves as the catalytic Tele-phosphohistidine intermediate. The active-site Proton donor/acceptor is the Glu86.

It belongs to the phosphoglycerate mutase family. BPG-dependent PGAM subfamily.

The enzyme catalyses (2R)-2-phosphoglycerate = (2R)-3-phosphoglycerate. The protein operates within carbohydrate degradation; glycolysis; pyruvate from D-glyceraldehyde 3-phosphate: step 3/5. Functionally, catalyzes the interconversion of 2-phosphoglycerate and 3-phosphoglycerate. In Fusobacterium nucleatum subsp. nucleatum (strain ATCC 25586 / DSM 15643 / BCRC 10681 / CIP 101130 / JCM 8532 / KCTC 2640 / LMG 13131 / VPI 4355), this protein is 2,3-bisphosphoglycerate-dependent phosphoglycerate mutase.